The primary structure comprises 178 residues: ATP-dependent protease subunit HslV (178 aa).

Residue Thr-7 is part of the active site. Positions 162, 165, and 168 each coordinate Na(+).

Belongs to the peptidase T1B family. HslV subfamily. In terms of assembly, a double ring-shaped homohexamer of HslV is capped on each side by a ring-shaped HslU homohexamer. The assembly of the HslU/HslV complex is dependent on binding of ATP.

It localises to the cytoplasm. The enzyme catalyses ATP-dependent cleavage of peptide bonds with broad specificity.. Its activity is regulated as follows. Allosterically activated by HslU binding. Protease subunit of a proteasome-like degradation complex believed to be a general protein degrading machinery. This chain is ATP-dependent protease subunit HslV, found in Burkholderia ambifaria (strain ATCC BAA-244 / DSM 16087 / CCUG 44356 / LMG 19182 / AMMD) (Burkholderia cepacia (strain AMMD)).